Reading from the N-terminus, the 162-residue chain is Nucleotide-binding protein CHU_2278 (162 aa).

This sequence belongs to the YajQ family.

In terms of biological role, nucleotide-binding protein. The protein is Nucleotide-binding protein CHU_2278 of Cytophaga hutchinsonii (strain ATCC 33406 / DSM 1761 / CIP 103989 / NBRC 15051 / NCIMB 9469 / D465).